Reading from the N-terminus, the 487-residue chain is N-succinylglutamate 5-semialdehyde dehydrogenase (487 aa).

221–226 (GSSRTG) contributes to the NAD(+) binding site. Active-site residues include glutamate 244 and cysteine 278.

The protein belongs to the aldehyde dehydrogenase family. AstD subfamily.

The enzyme catalyses N-succinyl-L-glutamate 5-semialdehyde + NAD(+) + H2O = N-succinyl-L-glutamate + NADH + 2 H(+). The protein operates within amino-acid degradation; L-arginine degradation via AST pathway; L-glutamate and succinate from L-arginine: step 4/5. Functionally, catalyzes the NAD-dependent reduction of succinylglutamate semialdehyde into succinylglutamate. The chain is N-succinylglutamate 5-semialdehyde dehydrogenase from Pseudomonas entomophila (strain L48).